Consider the following 166-residue polypeptide: Ribosome maturation factor RimM (166 aa).

The PRC barrel domain occupies 91-163 (EDEFYEFQLI…KMQITPPEGW (73 aa)).

It belongs to the RimM family. Binds ribosomal protein uS19.

The protein localises to the cytoplasm. In terms of biological role, an accessory protein needed during the final step in the assembly of 30S ribosomal subunit, possibly for assembly of the head region. Essential for efficient processing of 16S rRNA. May be needed both before and after RbfA during the maturation of 16S rRNA. It has affinity for free ribosomal 30S subunits but not for 70S ribosomes. This is Ribosome maturation factor RimM from Sulfurihydrogenibium sp. (strain YO3AOP1).